Reading from the N-terminus, the 217-residue chain is Large ribosomal subunit protein uL3 (217 aa).

A disordered region spans residues 127 to 162 (GFSRGPMSHGSKNHRAPGSTGAGTTPGRIYPGKRMA). The segment covering 142-153 (APGSTGAGTTPG) has biased composition (low complexity).

This sequence belongs to the universal ribosomal protein uL3 family. In terms of assembly, part of the 50S ribosomal subunit. Forms a cluster with proteins L14 and L19.

One of the primary rRNA binding proteins, it binds directly near the 3'-end of the 23S rRNA, where it nucleates assembly of the 50S subunit. This is Large ribosomal subunit protein uL3 from Prochlorococcus marinus (strain MIT 9312).